Here is a 380-residue protein sequence, read N- to C-terminus: Phospho-N-acetylmuramoyl-pentapeptide-transferase (380 aa).

The next 9 helical transmembrane spans lie at 25-45, 70-90, 98-118, 142-162, 173-193, 209-229, 245-265, 272-294, and 357-377; these read RAAAAFVTALLVSFILGPAII, TTPTMGGLIILAATFAPVLLW, VLLAMAVTAWMGVIGFLDDYL, VLCGLGLGAYLLLSPISTLPG, VLVVPAVAWAAWLYIPWVTFI, GLSSGLVAIAVLTLGLFAYVL, GAGELTVFCAAVVGACIGFLW, QVFMGDTGSLALGGAVGAIAILL, and QVVVRFWIIGILCAILALSTL.

The protein belongs to the glycosyltransferase 4 family. MraY subfamily. The cofactor is Mg(2+).

The protein localises to the cell inner membrane. The catalysed reaction is UDP-N-acetyl-alpha-D-muramoyl-L-alanyl-gamma-D-glutamyl-meso-2,6-diaminopimeloyl-D-alanyl-D-alanine + di-trans,octa-cis-undecaprenyl phosphate = di-trans,octa-cis-undecaprenyl diphospho-N-acetyl-alpha-D-muramoyl-L-alanyl-D-glutamyl-meso-2,6-diaminopimeloyl-D-alanyl-D-alanine + UMP. Its pathway is cell wall biogenesis; peptidoglycan biosynthesis. Catalyzes the initial step of the lipid cycle reactions in the biosynthesis of the cell wall peptidoglycan: transfers peptidoglycan precursor phospho-MurNAc-pentapeptide from UDP-MurNAc-pentapeptide onto the lipid carrier undecaprenyl phosphate, yielding undecaprenyl-pyrophosphoryl-MurNAc-pentapeptide, known as lipid I. This chain is Phospho-N-acetylmuramoyl-pentapeptide-transferase, found in Gemmatimonas aurantiaca (strain DSM 14586 / JCM 11422 / NBRC 100505 / T-27).